The chain runs to 325 residues: GMP reductase (325 aa).

C173 functions as the Thioimidate intermediate in the catalytic mechanism. An NADP(+)-binding site is contributed by 202–225 (IIADGGIRSHGDIAKSVRFGATMV).

Belongs to the IMPDH/GMPR family. GuaC type 2 subfamily.

The enzyme catalyses IMP + NH4(+) + NADP(+) = GMP + NADPH + 2 H(+). In terms of biological role, catalyzes the irreversible NADPH-dependent deamination of GMP to IMP. It functions in the conversion of nucleobase, nucleoside and nucleotide derivatives of G to A nucleotides, and in maintaining the intracellular balance of A and G nucleotides. The chain is GMP reductase from Acidovorax sp. (strain JS42).